A 410-amino-acid chain; its full sequence is Dihydrolipoyllysine-residue succinyltransferase component of 2-oxoglutarate dehydrogenase complex (410 aa).

The region spanning 3–81 (IINIFIPDLP…QVIGTLLKIG (79 aa)) is the Lipoyl-binding domain. At lysine 44 the chain carries N6-lipoyllysine. One can recognise a Peripheral subunit-binding (PSBD) domain in the interval 112 to 150 (TYSPTVRRLISMHDLRDVDIIQGTGTKNRLTRKDILNYL). Active-site residues include histidine 381 and aspartate 385.

The protein belongs to the 2-oxoacid dehydrogenase family. As to quaternary structure, forms a 24-polypeptide structural core with octahedral symmetry. Part of the 2-oxoglutarate dehydrogenase (OGDH) complex composed of E1 (2-oxoglutarate dehydrogenase), E2 (dihydrolipoamide succinyltransferase) and E3 (dihydrolipoamide dehydrogenase); the complex contains multiple copies of the three enzymatic components (E1, E2 and E3). (R)-lipoate serves as cofactor.

The catalysed reaction is N(6)-[(R)-dihydrolipoyl]-L-lysyl-[protein] + succinyl-CoA = N(6)-[(R)-S(8)-succinyldihydrolipoyl]-L-lysyl-[protein] + CoA. Its pathway is amino-acid degradation; L-lysine degradation via saccharopine pathway; glutaryl-CoA from L-lysine: step 6/6. In terms of biological role, E2 component of the 2-oxoglutarate dehydrogenase (OGDH) complex which catalyzes the second step in the conversion of 2-oxoglutarate to succinyl-CoA and CO(2). The sequence is that of Dihydrolipoyllysine-residue succinyltransferase component of 2-oxoglutarate dehydrogenase complex (sucB) from Buchnera aphidicola subsp. Baizongia pistaciae (strain Bp).